A 263-amino-acid polypeptide reads, in one-letter code: Peptidoglycan-N-acetylmuramic acid deacetylase PdaA (263 aa).

Residues methionine 1–alanine 23 form the signal peptide. The NodB homology domain occupies lysine 66–lysine 247. Aspartate 73 serves as the catalytic Proton acceptor. Residues histidine 124 and histidine 128 each coordinate a divalent metal cation. Residue histidine 222 is the Proton donor of the active site.

The protein belongs to the polysaccharide deacetylase family.

Functionally, catalyzes the deacetylation of N-acetylmuramic acid (MurNAc) residues in glycan strands of peptidoglycan, leading to the formation of muramic delta-lactam residues in spore cortex, after transpeptidation of deacetylated muramic acid residues. PdaA probably carries out both deacetylation and lactam ring formation and requires the product of CwlD activity on peptidoglycan as a substrate. Is required for germination. Cannot use chitin oligomer (hexa-N-acetylchitohexaose) as a substrate. The polypeptide is Peptidoglycan-N-acetylmuramic acid deacetylase PdaA (pdaA) (Bacillus subtilis (strain 168)).